We begin with the raw amino-acid sequence, 734 residues long: Methionine--tRNA ligase (734 aa).

A 'HIGH' region motif is present at residues 12 to 22; the sequence is PYVNNIPHLGN. C143, C146, C155, and C158 together coordinate Zn(2+). Residues 330 to 334 carry the 'KMSKS' region motif; the sequence is KFSKS. K333 serves as a coordination point for ATP. In terms of domain architecture, tRNA-binding spans 570-675; that stretch reads FREKVLLRVV…QNPIAGERII (106 aa).

It belongs to the class-I aminoacyl-tRNA synthetase family. MetG type 1 subfamily. Homodimer. Zn(2+) is required as a cofactor.

It localises to the cytoplasm. The catalysed reaction is tRNA(Met) + L-methionine + ATP = L-methionyl-tRNA(Met) + AMP + diphosphate. In terms of biological role, is required not only for elongation of protein synthesis but also for the initiation of all mRNA translation through initiator tRNA(fMet) aminoacylation. The protein is Methionine--tRNA ligase of Borreliella burgdorferi (strain ZS7) (Borrelia burgdorferi).